Reading from the N-terminus, the 229-residue chain is Ribonuclease 3 (229 aa).

The 130-residue stretch at E5–G134 folds into the RNase III domain. E47 contributes to the Mg(2+) binding site. D51 is a catalytic residue. Mg(2+) contacts are provided by D120 and E123. The active site involves E123. The 70-residue stretch at D160–N229 folds into the DRBM domain.

This sequence belongs to the ribonuclease III family. As to quaternary structure, homodimer. It depends on Mg(2+) as a cofactor.

The protein localises to the cytoplasm. The enzyme catalyses Endonucleolytic cleavage to 5'-phosphomonoester.. Digests double-stranded RNA. Involved in the processing of primary rRNA transcript to yield the immediate precursors to the large and small rRNAs (23S and 16S). Also processes some mRNAs, and tRNAs when they are encoded in the rRNA operon. Functionally, CRISPR (clustered regularly interspaced short palindromic repeat) is an adaptive immune system that provides protection against mobile genetic elements (viruses, transposable elements and conjugative plasmids). CRISPR clusters contain spacers, sequences complementary to antecedent mobile elements, and target invading nucleic acids. CRISPR clusters are transcribed and processed into CRISPR RNA (crRNA). In this organism endogenous ribonuclease 3 and Cas9 are required for correct coprocessing of pre-crRNA and the trans-encoded small RNA (tracrRNA). Cas9, crRNA and tracrRNA are required for cleavage of invading DNA. Complements pre-crRNA and tracRNA coprocessing defects in an rnc deletion in S.pyogenes strain 370. The protein is Ribonuclease 3 of Streptococcus thermophilus (strain ATCC BAA-491 / LMD-9).